The primary structure comprises 274 residues: Large ribosomal subunit protein uL2 (274 aa).

Disordered stretches follow at residues 36–61 (QKSK…HKQR) and 223–274 (VAMN…RRKR). Polar residues predominate over residues 37–46 (KSKTGGRNSN). Composition is skewed to basic residues over residues 50–61 (TTRHRGGGHKQR) and 254–274 (KGHK…RRKR).

It belongs to the universal ribosomal protein uL2 family. In terms of assembly, part of the 50S ribosomal subunit. Forms a bridge to the 30S subunit in the 70S ribosome.

One of the primary rRNA binding proteins. Required for association of the 30S and 50S subunits to form the 70S ribosome, for tRNA binding and peptide bond formation. It has been suggested to have peptidyltransferase activity; this is somewhat controversial. Makes several contacts with the 16S rRNA in the 70S ribosome. The chain is Large ribosomal subunit protein uL2 from Halorhodospira halophila (strain DSM 244 / SL1) (Ectothiorhodospira halophila (strain DSM 244 / SL1)).